The following is a 398-amino-acid chain: S-adenosylmethionine synthase (398 aa).

Residue His16 participates in ATP binding. Asp18 provides a ligand contact to Mg(2+). Glu51 is a K(+) binding site. The L-methionine site is built by Glu64 and Gln108. The flexible loop stretch occupies residues 108-118; sequence QSADIAQGVDA. Residues 176 to 178, 242 to 243, Asp251, 257 to 258, Ala274, and Lys278 each bind ATP; these read DSK, KF, and RK. Asp251 provides a ligand contact to L-methionine. Lys282 is a binding site for L-methionine.

Belongs to the AdoMet synthase family. In terms of assembly, homotetramer; dimer of dimers. Mg(2+) is required as a cofactor. Requires K(+) as cofactor.

The protein localises to the cytoplasm. The enzyme catalyses L-methionine + ATP + H2O = S-adenosyl-L-methionine + phosphate + diphosphate. It functions in the pathway amino-acid biosynthesis; S-adenosyl-L-methionine biosynthesis; S-adenosyl-L-methionine from L-methionine: step 1/1. Catalyzes the formation of S-adenosylmethionine (AdoMet) from methionine and ATP. The overall synthetic reaction is composed of two sequential steps, AdoMet formation and the subsequent tripolyphosphate hydrolysis which occurs prior to release of AdoMet from the enzyme. The chain is S-adenosylmethionine synthase from Rhodopseudomonas palustris (strain HaA2).